The chain runs to 148 residues: uncharacterized protein (148 aa).

Residues 1-22 (MVQTVLNSVWLWRSVLLRLTFS) form the signal peptide.

This is an uncharacterized protein from Saccharomyces cerevisiae (strain ATCC 204508 / S288c) (Baker's yeast).